The chain runs to 190 residues: Probable calcium-binding protein CML27 (190 aa).

3 consecutive EF-hand domains span residues 27-62 (LNALRLRRVFDLFDRNGDGEITLDEMASALDALGLG), 115-150 (DDEGDMKEAFRVFDEDGDGFISAAELQAVLKKLGLP), and 153-188 (RNLATVQEMICNVDRDCDGRVDFGEFKCMMQGITVW). Positions 40, 42, 44, 46, 51, 128, 130, 132, 139, 166, 168, 170, 172, and 177 each coordinate Ca(2+).

In terms of biological role, potential calcium sensor. The polypeptide is Probable calcium-binding protein CML27 (CML27) (Oryza sativa subsp. japonica (Rice)).